The primary structure comprises 279 residues: Zinc-finger homeodomain protein 1 (279 aa).

Residues methionine 1–methionine 13 show a composition bias toward acidic residues. The disordered stretch occupies residues methionine 1–valine 47. The ZF-HD dimerization-type; degenerate zinc finger occupies tyrosine 57–glutamate 106. The disordered stretch occupies residues alanine 157–glycine 191. The homeobox DNA-binding region spans lysine 215–leucine 278.

Homo- and heterodimer with other ZFHD proteins.

The protein resides in the nucleus. Functionally, putative transcription factor. This chain is Zinc-finger homeodomain protein 1 (ZHD1), found in Oryza sativa subsp. indica (Rice).